Consider the following 194-residue polypeptide: Orotate phosphoribosyltransferase (194 aa).

Residues R102, K103, K106, H108, and 129-137 (EDVVTTGGS) contribute to the 5-phospho-alpha-D-ribose 1-diphosphate site. Orotate-binding residues include T133 and R161.

The protein belongs to the purine/pyrimidine phosphoribosyltransferase family. PyrE subfamily. As to quaternary structure, homodimer. Mg(2+) is required as a cofactor.

The enzyme catalyses orotidine 5'-phosphate + diphosphate = orotate + 5-phospho-alpha-D-ribose 1-diphosphate. The protein operates within pyrimidine metabolism; UMP biosynthesis via de novo pathway; UMP from orotate: step 1/2. Catalyzes the transfer of a ribosyl phosphate group from 5-phosphoribose 1-diphosphate to orotate, leading to the formation of orotidine monophosphate (OMP). This Prochlorococcus marinus (strain MIT 9211) protein is Orotate phosphoribosyltransferase.